The primary structure comprises 129 residues: Histone H2B.1 (129 aa).

A compositionally biased stretch (basic and acidic residues) spans 1 to 19 (MAPKAEKKPASKAPAEKKP). The segment at 1–37 (MAPKAEKKPASKAPAEKKPAAKKTASTDSKKRTKTRK) is disordered. 2 positions are modified to N6-acetyllysine; alternate: Lys7 and Lys8. Glycyl lysine isopeptide (Lys-Gly) (interchain with G-Cter in SUMO); alternate cross-links involve residues Lys7 and Lys8. The residue at position 11 (Ser11) is a Phosphoserine. N6-acetyllysine is present on Lys12. At Lys17 the chain carries N6-acetyllysine; alternate. Lys17 participates in a covalent cross-link: Glycyl lysine isopeptide (Lys-Gly) (interchain with G-Cter in SUMO); alternate. Lys18 participates in a covalent cross-link: Glycyl lysine isopeptide (Lys-Gly) (interchain with G-Cter in SUMO). A Glycyl lysine isopeptide (Lys-Gly) (interchain with G-Cter in ubiquitin) cross-link involves residue Lys123.

It belongs to the histone H2B family. As to quaternary structure, the nucleosome is a histone octamer containing two molecules each of H2A, H2B, H3 and H4 assembled in one H3-H4 heterotetramer and two H2A-H2B heterodimers. The octamer wraps approximately 147 bp of DNA. Post-translationally, monoubiquitinated by the UBC2-BRE1 complex to form H2BK123ub1. H2BK123ub1 gives a specific tag for epigenetic transcriptional activation and is also prerequisite for H3K4me and H3K79me formation. H2BK123ub1 also modulates the formation of double-strand breaks during meiosis and is a prerequisite for DNA-damage checkpoint activation. In terms of processing, phosphorylated by STE20 to form H2BS10ph during progression through meiotic prophase. May be correlated with chromosome condensation. Acetylated by GCN5 to form H2BK11ac and H2BK16ac. H2BK16ac can also be formed by ESA1. Acetylation of N-terminal lysines and particularly formation of H2BK11acK16ac has a positive effect on transcription. Post-translationally, sumoylation to form H2BK6su or H2BK7su, and probably also H2BK16su or H2BK17su, occurs preferentially near the telomeres and represses gene transcription.

The protein resides in the nucleus. Its subcellular location is the chromosome. Core component of nucleosome. Nucleosomes wrap and compact DNA into chromatin, limiting DNA accessibility to the cellular machineries which require DNA as a template. Histones thereby play a central role in transcription regulation, DNA repair, DNA replication and chromosomal stability. DNA accessibility is regulated via a complex set of post-translational modifications of histones, also called histone code, and nucleosome remodeling. This Meyerozyma guilliermondii (strain ATCC 6260 / CBS 566 / DSM 6381 / JCM 1539 / NBRC 10279 / NRRL Y-324) (Yeast) protein is Histone H2B.1 (HTB1).